The following is a 245-amino-acid chain: S-methyl-5'-thioinosine phosphorylase (245 aa).

Phosphate is bound by residues Thr-10 and 52 to 53 (RH). Residue Met-185 coordinates substrate. Thr-186 is a phosphate binding site. 209 to 211 (NPA) serves as a coordination point for substrate.

This sequence belongs to the PNP/MTAP phosphorylase family. MTAP subfamily. Homotrimer.

The catalysed reaction is S-methyl-5'-thioinosine + phosphate = 5-(methylsulfanyl)-alpha-D-ribose 1-phosphate + hypoxanthine. Its pathway is purine metabolism; purine nucleoside salvage. Catalyzes the reversible phosphorylation of S-methyl-5'-thioinosine (MTI) to hypoxanthine and 5-methylthioribose-1-phosphate. Involved in the breakdown of S-methyl-5'-thioadenosine (MTA), a major by-product of polyamine biosynthesis. Catabolism of (MTA) occurs via deamination to MTI and phosphorolysis to hypoxanthine. Involved in quorum sensing. This Pseudomonas aeruginosa (strain ATCC 15692 / DSM 22644 / CIP 104116 / JCM 14847 / LMG 12228 / 1C / PRS 101 / PAO1) protein is S-methyl-5'-thioinosine phosphorylase.